Here is a 273-residue protein sequence, read N- to C-terminus: Shikimate dehydrogenase (NADP(+)) (273 aa).

Residues 15–17 and threonine 62 contribute to the shikimate site; that span reads SQS. Lysine 66 functions as the Proton acceptor in the catalytic mechanism. Residue glutamate 78 coordinates NADP(+). Shikimate-binding residues include asparagine 87 and aspartate 102. Residues 127–131, 151–156, and methionine 215 each bind NADP(+); these read GAGGA and NRTVTK. Tyrosine 217 provides a ligand contact to shikimate. Residue glycine 239 coordinates NADP(+).

Belongs to the shikimate dehydrogenase family. As to quaternary structure, homodimer.

The enzyme catalyses shikimate + NADP(+) = 3-dehydroshikimate + NADPH + H(+). Its pathway is metabolic intermediate biosynthesis; chorismate biosynthesis; chorismate from D-erythrose 4-phosphate and phosphoenolpyruvate: step 4/7. Its function is as follows. Involved in the biosynthesis of the chorismate, which leads to the biosynthesis of aromatic amino acids. Catalyzes the reversible NADPH linked reduction of 3-dehydroshikimate (DHSA) to yield shikimate (SA). The sequence is that of Shikimate dehydrogenase (NADP(+)) from Laribacter hongkongensis (strain HLHK9).